The primary structure comprises 233 residues: 5-demethoxyubiquinone hydroxylase, mitochondrial (233 aa).

A mitochondrion-targeting transit peptide spans 1–15; it reads MLSRVSVFKPASRGF. Phosphoserine occurs at positions 20 and 28. Residue Thr-32 is modified to Phosphothreonine. Fe cation contacts are provided by Glu-63, Glu-95, His-98, Glu-147, Glu-194, and His-197.

Belongs to the COQ7 family. Component of a multi-subunit COQ enzyme complex, composed of at least COQ3, COQ4, COQ5, COQ6, COQ7 and COQ9. It depends on Fe cation as a cofactor. Phosphorylated. Dephosphorylated by PTC7; dephosphorylation is essential for enzyme activation.

It is found in the mitochondrion inner membrane. The enzyme catalyses a 5-methoxy-2-methyl-3-(all-trans-polyprenyl)benzene-1,4-diol + AH2 + O2 = a 3-demethylubiquinol + A + H2O. The catalysed reaction is a 5-methoxy-2-methyl-3-(all-trans-polyprenyl)benzoquinone + NADH + O2 = a 3-demethylubiquinone + NAD(+) + H2O. It functions in the pathway cofactor biosynthesis; ubiquinone biosynthesis. Dephosphorylation by PTC7 leads to activation. Its function is as follows. Catalyzes the hydroxylation of 2-hexaprenyl-3-methyl-6-methoxy-1,4-benzoquinol (DMQH2) during ubiquinone biosynthesis. Also catalyzes the hydroxylation of the 5-methoxy-2-methyl-3-(all-trans-polyprenyl)benzoquinone at the C6 position and participates in the biosynthesis of ubiquinone. Also has a structural role in the COQ enzyme complex, stabilizing COQ3 and COQ4 polypeptides. In Saccharomyces cerevisiae (strain ATCC 204508 / S288c) (Baker's yeast), this protein is 5-demethoxyubiquinone hydroxylase, mitochondrial.